The primary structure comprises 341 residues: MTLKGKKVTVHDMTLRDGMHPKRHLMTLDQMTAIATGLDAAGVPLIEVTHGDGLGGSSVNYGFPAHTDEEYLGAVIPKMKNAKVSALLLPGIGTVDHLKMARDLGVHTIRVATHCTEADVSEQHITMARKLEMDTVGFLMMAHMNSAEGLVKQAKLMESYGANCIYVTDSAGHLLPEGVKERLSAVRAALKPETELGFHGHHNLAMGVANSIAAIEVGANRIDAAAAGLGAGAGNTPMEVLIAVCSLMGIETGVDVAKITDVAEDLVVPMMDFPIRIDRDALTLGYAGVYGSFLLFAKRASAKYGVPARDILVELGRRGMVGGQEDMIEDTAITMARERGV.

The Pyruvate carboxyltransferase domain maps to 8 to 260 (VTVHDMTLRD…ETGVDVAKIT (253 aa)). 16 to 17 (RD) serves as a coordination point for substrate. Asp17 is a binding site for Mn(2+). His20 (proton acceptor) is an active-site residue. Substrate contacts are provided by Ser170 and His199. Residues His199 and His201 each coordinate Mn(2+). A substrate-binding site is contributed by Tyr290.

This sequence belongs to the 4-hydroxy-2-oxovalerate aldolase family.

It carries out the reaction (S)-4-hydroxy-2-oxopentanoate = acetaldehyde + pyruvate. The sequence is that of 4-hydroxy-2-oxovalerate aldolase 2 from Dechloromonas aromatica (strain RCB).